A 211-amino-acid polypeptide reads, in one-letter code: Thymidylate kinase (211 aa).

An ATP-binding site is contributed by 7–14 (GIDGCGKT).

This sequence belongs to the thymidylate kinase family.

It catalyses the reaction dTMP + ATP = dTDP + ADP. Its function is as follows. Phosphorylation of dTMP to form dTDP in both de novo and salvage pathways of dTTP synthesis. This Anaplasma marginale (strain Florida) protein is Thymidylate kinase.